Reading from the N-terminus, the 101-residue chain is ATP-dependent Clp protease adapter protein ClpS (101 aa).

This sequence belongs to the ClpS family. Binds to the N-terminal domain of the chaperone ClpA.

Involved in the modulation of the specificity of the ClpAP-mediated ATP-dependent protein degradation. The chain is ATP-dependent Clp protease adapter protein ClpS from Corynebacterium jeikeium (strain K411).